A 166-amino-acid polypeptide reads, in one-letter code: SPbeta prophage-derived uncharacterized protein YomO (166 aa).

This chain is SPbeta prophage-derived uncharacterized protein YomO (yomO), found in Bacillus subtilis (strain 168).